Reading from the N-terminus, the 426-residue chain is Serine--tRNA ligase (426 aa).

Residue 228–230 coordinates L-serine; the sequence is TSE. Residues 259–261 and Val275 each bind ATP; that span reads RRE. Glu282 is an L-serine binding site. 346-349 contributes to the ATP binding site; that stretch reads ELTS. Thr386 is a binding site for L-serine.

This sequence belongs to the class-II aminoacyl-tRNA synthetase family. Type-1 seryl-tRNA synthetase subfamily. As to quaternary structure, homodimer. The tRNA molecule binds across the dimer.

It is found in the cytoplasm. It catalyses the reaction tRNA(Ser) + L-serine + ATP = L-seryl-tRNA(Ser) + AMP + diphosphate + H(+). The catalysed reaction is tRNA(Sec) + L-serine + ATP = L-seryl-tRNA(Sec) + AMP + diphosphate + H(+). It functions in the pathway aminoacyl-tRNA biosynthesis; selenocysteinyl-tRNA(Sec) biosynthesis; L-seryl-tRNA(Sec) from L-serine and tRNA(Sec): step 1/1. Functionally, catalyzes the attachment of serine to tRNA(Ser). Is also able to aminoacylate tRNA(Sec) with serine, to form the misacylated tRNA L-seryl-tRNA(Sec), which will be further converted into selenocysteinyl-tRNA(Sec). The polypeptide is Serine--tRNA ligase (Arthrobacter sp. (strain FB24)).